The following is a 44-amino-acid chain: Photosystem I reaction center subunit IX (44 aa).

A helical membrane pass occupies residues 7–27 (YLSVAPVLSTLSLGFLTGFLI).

It belongs to the PsaJ family.

The protein resides in the plastid membrane. Its function is as follows. May help in the organization of the PsaE and PsaF subunits. The polypeptide is Photosystem I reaction center subunit IX (Cuscuta gronovii (Common dodder)).